We begin with the raw amino-acid sequence, 246 residues long: MAMEYFKGKVKENIELVEGIYSLVVEHEAKINAGQFYMIKTPNTFLGRPISVCEVNGNDVRFVYATVGAGTNEMKKMISGDEIEIIGPLGNGFDINKDYGRVALVSGGIGTAPMLELAKSLRKNNKDIKMDFYGGFRDDIYLVDEIAEYVDEVKISTNTGKHGHKGFVTEILPLQEYDTVLCCGPEIMMKKVVEMCKEAKVNVYISMEKHMACGVGACLVCICKTKSGNKRTCKDGPVFNGLEVEF.

An FAD-binding FR-type domain is found at 3 to 95 (MEYFKGKVKE…IGPLGNGFDI (93 aa)). FAD-binding positions include 48–51 (RPIS) and 70–71 (GT). [2Fe-2S] cluster is bound by residues Cys213, Cys218, Cys221, and Cys233.

Belongs to the PyrK family. As to quaternary structure, heterotetramer of 2 PyrK and 2 PyrD type B subunits. [2Fe-2S] cluster is required as a cofactor. FAD serves as cofactor.

It participates in pyrimidine metabolism; UMP biosynthesis via de novo pathway; orotate from (S)-dihydroorotate (NAD(+) route): step 1/1. Responsible for channeling the electrons from the oxidation of dihydroorotate from the FMN redox center in the PyrD type B subunit to the ultimate electron acceptor NAD(+). This Clostridium perfringens (strain 13 / Type A) protein is Dihydroorotate dehydrogenase B (NAD(+)), electron transfer subunit.